Consider the following 357-residue polypeptide: Dihydroorotate dehydrogenase (quinone) (357 aa).

Residues 61–65 and T85 contribute to the FMN site; that span reads AGFDK. A substrate-binding site is contributed by K65. 110–114 contacts substrate; sequence NRFGF. 2 residues coordinate FMN: N141 and N172. N172 contributes to the substrate binding site. S175 functions as the Nucleophile in the catalytic mechanism. Residue N177 participates in substrate binding. The FMN site is built by K217 and G245. 246 to 247 is a substrate binding site; that stretch reads NT. Residues G268, G297, and 318-319 contribute to the FMN site; that span reads YS.

The protein belongs to the dihydroorotate dehydrogenase family. Type 2 subfamily. As to quaternary structure, monomer. FMN serves as cofactor.

The protein localises to the cell membrane. It catalyses the reaction (S)-dihydroorotate + a quinone = orotate + a quinol. Its pathway is pyrimidine metabolism; UMP biosynthesis via de novo pathway; orotate from (S)-dihydroorotate (quinone route): step 1/1. Catalyzes the conversion of dihydroorotate to orotate with quinone as electron acceptor. In Xanthobacter autotrophicus (strain ATCC BAA-1158 / Py2), this protein is Dihydroorotate dehydrogenase (quinone).